Reading from the N-terminus, the 388-residue chain is Succinate--CoA ligase [ADP-forming] subunit beta (388 aa).

Positions 9–244 (KQLFAEFGLP…PSQEDEREAH (236 aa)) constitute an ATP-grasp domain. Residues K46, 53–55 (GRG), E99, S102, and E107 each bind ATP. 2 residues coordinate Mg(2+): N199 and D213. Substrate-binding positions include N264 and 321-323 (GIV).

It belongs to the succinate/malate CoA ligase beta subunit family. Heterotetramer of two alpha and two beta subunits. Mg(2+) serves as cofactor.

The catalysed reaction is succinate + ATP + CoA = succinyl-CoA + ADP + phosphate. It carries out the reaction GTP + succinate + CoA = succinyl-CoA + GDP + phosphate. The protein operates within carbohydrate metabolism; tricarboxylic acid cycle; succinate from succinyl-CoA (ligase route): step 1/1. Succinyl-CoA synthetase functions in the citric acid cycle (TCA), coupling the hydrolysis of succinyl-CoA to the synthesis of either ATP or GTP and thus represents the only step of substrate-level phosphorylation in the TCA. The beta subunit provides nucleotide specificity of the enzyme and binds the substrate succinate, while the binding sites for coenzyme A and phosphate are found in the alpha subunit. The protein is Succinate--CoA ligase [ADP-forming] subunit beta of Aliivibrio fischeri (strain ATCC 700601 / ES114) (Vibrio fischeri).